The primary structure comprises 600 residues: Epidermal growth factor receptor kinase substrate 8-like protein 3 (600 aa).

The PTB domain maps to 28-155 (QHRVEHLMTC…ALEEELEERP (128 aa)). Disordered regions lie at residues 152–245 (EERP…PERD) and 429–452 (LHFP…PLSS). Positions 204–214 (SERSISPSSRS) are enriched in low complexity. The residue at position 238 (serine 238) is a Phosphoserine. The SH3 domain maps to 457-516 (RAALKMQVLYEFEARNAQELTVAQGEILEVLDQSKRWWLVKNEAGLTGYIPSNILEPLPA).

The protein belongs to the EPS8 family. Interacts with ABI1. Part of a complex that contains SOS1, ABI1 and EPS8L2. Interacts with FASLG. As to expression, detected in embryonic gut. Detected in adult testis, placenta, adrenal gland and intestine.

The protein resides in the cytoplasm. The polypeptide is Epidermal growth factor receptor kinase substrate 8-like protein 3 (Eps8l3) (Mus musculus (Mouse)).